We begin with the raw amino-acid sequence, 345 residues long: S-adenosylmethionine:tRNA ribosyltransferase-isomerase (345 aa).

Belongs to the QueA family. In terms of assembly, monomer.

The protein resides in the cytoplasm. The enzyme catalyses 7-aminomethyl-7-carbaguanosine(34) in tRNA + S-adenosyl-L-methionine = epoxyqueuosine(34) in tRNA + adenine + L-methionine + 2 H(+). Its pathway is tRNA modification; tRNA-queuosine biosynthesis. In terms of biological role, transfers and isomerizes the ribose moiety from AdoMet to the 7-aminomethyl group of 7-deazaguanine (preQ1-tRNA) to give epoxyqueuosine (oQ-tRNA). This is S-adenosylmethionine:tRNA ribosyltransferase-isomerase from Shewanella baltica (strain OS155 / ATCC BAA-1091).